Consider the following 324-residue polypeptide: Short chain dehydrogenase/reductase dmxR8 (324 aa).

Residues Leu33, Lys58, Asp83, and Asn110 each coordinate NADP(+). Catalysis depends on Ser163, which acts as the Proton donor. Positions 200 and 204 each coordinate NADP(+). The active-site Proton acceptor is the Tyr200. Residue Lys204 is the Lowers pKa of active site Tyr of the active site.

The protein belongs to the short-chain dehydrogenases/reductases (SDR) family.

It functions in the pathway secondary metabolite biosynthesis. Its function is as follows. Short chain dehydrogenase; part of the gene cluster that mediates the biosynthesis of the dimeric xanthones cryptosporioptides. The pathway begins with the synthesis of atrochrysone thioester by the polyketide synthase dmx-nrPKS. The atrochrysone carboxyl ACP thioesterase dmxR1 then breaks the thioester bond and releases the atrochrysone carboxylic acid from dmx-nrPKS. Atrochrysone carboxylic acid is decarboxylated by the decarboxylase dmxR15, and oxidized by the anthrone oxygenase dmxR16 to yield emodin. Emodin is then reduced to emodin hydroquinone by the oxidoreductase dmxR7. A-ring reduction by the short chain dehydrogenase dmxR18, dehydration by the scytalone dehydratase-like protein dmxR17 and probable spontaneous re-oxidation, results in overall deoxygenation to chrysophanol. Baeyer-Villiger oxidation by the Baeyer-Villiger monooxygenase (BVMO) dmxR6 then yields monodictylactone in equilibrium with monodictyphenone. In the case of the cryptosporioptides biosynthesis, monodictylactone is reduced at C-12 to an alcohol (by the short chain dehydrogenases dmxR12 or dmxR8) and hydroxylated at C-5 by dmxR9, yielding the electron-rich aromatic which could eliminate H(2)O to form the ortho-quinonemethide, followed by tautomerisation to paraquinone and complete the formal reduction to produce the 10-methylgroup. Conjugate addition of C-4a-OH to the resulting paraquinone by the monooxygenase dmxR10 then gives cyclohexadienone, which is then reduced at C-5 by the short chain dehydrogenase dmxR3 to give the dihydroxanthone. The 6,7-epoxide in the cryptosporioptides could be introduced by the cytochrome P450 monooxygenase dmxL3. The highly reducing PKS dmxL2 manufactures butyrate, which is further carboxylated by dmxL1 to form ethylmalonate. It is not yet clear whether the carboxylation occurs while the butyrate is attached to the ACP of dmxL2, but this unusual fungal metabolite could then be esterified to O-5 by the O-acetyltransferase dmxR13. Finally, dimerization performed by dmxR5 gives the observed dimers cryptosporioptides A, B and C as the final products of the pathway. The polypeptide is Short chain dehydrogenase/reductase dmxR8 (Cryptosporiopsis sp. (strain 8999)).